The following is a 428-amino-acid chain: 3-phosphoshikimate 1-carboxyvinyltransferase (428 aa).

The 3-phosphoshikimate site is built by lysine 22, serine 23, and arginine 27. Position 22 (lysine 22) interacts with phosphoenolpyruvate. Positions 94 and 122 each coordinate phosphoenolpyruvate. 3-phosphoshikimate is bound by residues serine 167, glutamine 169, aspartate 314, and lysine 341. Glutamine 169 contributes to the phosphoenolpyruvate binding site. The active-site Proton acceptor is aspartate 314. Residues arginine 345 and arginine 387 each contribute to the phosphoenolpyruvate site.

It belongs to the EPSP synthase family. Monomer.

It localises to the cytoplasm. It carries out the reaction 3-phosphoshikimate + phosphoenolpyruvate = 5-O-(1-carboxyvinyl)-3-phosphoshikimate + phosphate. It participates in metabolic intermediate biosynthesis; chorismate biosynthesis; chorismate from D-erythrose 4-phosphate and phosphoenolpyruvate: step 6/7. Its function is as follows. Catalyzes the transfer of the enolpyruvyl moiety of phosphoenolpyruvate (PEP) to the 5-hydroxyl of shikimate-3-phosphate (S3P) to produce enolpyruvyl shikimate-3-phosphate and inorganic phosphate. In Geotalea uraniireducens (strain Rf4) (Geobacter uraniireducens), this protein is 3-phosphoshikimate 1-carboxyvinyltransferase.